The following is a 438-amino-acid chain: MAGSAQPAAVHWRLWLAQVGVFAGLALLLLITLIGAASPGAGLPCFYAAIVNYNARNLSADGGAWAQRELGARHPALFLETPTTAAFSAYTAVVLLAVAAFDVAAAIIIRRENSGGFAAAYHMNALATLATPPGALLLGALAAWTLQAAVLLLSHKIMVLAAATYLAHLAPPAAFVGLFCTAGLPGAEYAQAVHALRERSPRAHRLLGPGRAVMINLAGGLLALIIGTAPLMLGQLLGAGLGLSLAQTVVAGVTVFCLAAVLFLVLTELVLSRYTQVLPGPAFGTLVAASCIAVASHDYFHQLRGVVRTQAPRAAARVKLALAGVALLAVAMLVLRLVRACLHHRRKGSAFYGHVSAARQQAARYIARARSSRGMAPLEGDAAALLDRGVASDDEEAVYEAHAPPRPPTIPLRRPEVPHSRASHPRPPPRSPPPAHVK.

The Intravirion portion of the chain corresponds to 1–13 (MAGSAQPAAVHWR). A helical membrane pass occupies residues 14 to 34 (LWLAQVGVFAGLALLLLITLI). Topologically, residues 35 to 88 (GAASPGAGLPCFYAAIVNYNARNLSADGGAWAQRELGARHPALFLETPTTAAFS) are virion surface. Residues 89 to 109 (AYTAVVLLAVAAFDVAAAIII) form a helical membrane-spanning segment. Residues 110–132 (RRENSGGFAAAYHMNALATLATP) lie on the Intravirion side of the membrane. A helical transmembrane segment spans residues 133 to 153 (PGALLLGALAAWTLQAAVLLL). Residues 154–158 (SHKIM) lie on the Virion surface side of the membrane. Residues 159 to 179 (VLAAATYLAHLAPPAAFVGLF) traverse the membrane as a helical segment. The Intravirion segment spans residues 180-212 (CTAGLPGAEYAQAVHALRERSPRAHRLLGPGRA). The helical transmembrane segment at 213-233 (VMINLAGGLLALIIGTAPLML) threads the bilayer. Residues 234-248 (GQLLGAGLGLSLAQT) lie on the Virion surface side of the membrane. A helical membrane pass occupies residues 249–269 (VVAGVTVFCLAAVLFLVLTEL). The Intravirion portion of the chain corresponds to 270 to 276 (VLSRYTQ). Residues 277-297 (VLPGPAFGTLVAASCIAVASH) form a helical membrane-spanning segment. Topologically, residues 298 to 317 (DYFHQLRGVVRTQAPRAAAR) are virion surface. Residues 318–338 (VKLALAGVALLAVAMLVLRLV) traverse the membrane as a helical segment. Over 339 to 438 (RACLHHRRKG…PRSPPPAHVK (100 aa)) the chain is Intravirion. Positions 395–438 (EEAVYEAHAPPRPPTIPLRRPEVPHSRASHPRPPPRSPPPAHVK) are disordered. Over residues 425-438 (PRPPPRSPPPAHVK) the composition is skewed to pro residues.

It belongs to the herpesviridae glycoprotein M family. As to quaternary structure, interacts (via N-terminus) with gN (via N-terminus). The gM-gN heterodimer forms the gCII complex. Post-translationally, N-glycosylated. It is not O-glycosylated.

It is found in the virion membrane. The protein resides in the host Golgi apparatus. Its subcellular location is the host trans-Golgi network. The protein localises to the host endosome membrane. It localises to the host nucleus inner membrane. Its function is as follows. Envelope glycoprotein important for virion assembly and egress. Plays a role in the correct incorporation of gH-gL into virion membrane. Directs the glycoprotein N (gN) to the host trans-Golgi network. In Bovine herpesvirus 1.1 (strain Cooper) (BoHV-1), this protein is Envelope glycoprotein M.